A 356-amino-acid chain; its full sequence is 3-dehydroquinate synthase (356 aa).

NAD(+) contacts are provided by residues 106–110 (GVVGD), 130–131 (TS), Lys-143, Lys-152, and 170–173 (FLKT). Glu-185, His-246, and His-263 together coordinate Zn(2+).

This sequence belongs to the sugar phosphate cyclases superfamily. Dehydroquinate synthase family. Requires NAD(+) as cofactor. Co(2+) is required as a cofactor. Zn(2+) serves as cofactor.

It localises to the cytoplasm. It carries out the reaction 7-phospho-2-dehydro-3-deoxy-D-arabino-heptonate = 3-dehydroquinate + phosphate. It participates in metabolic intermediate biosynthesis; chorismate biosynthesis; chorismate from D-erythrose 4-phosphate and phosphoenolpyruvate: step 2/7. Functionally, catalyzes the conversion of 3-deoxy-D-arabino-heptulosonate 7-phosphate (DAHP) to dehydroquinate (DHQ). The polypeptide is 3-dehydroquinate synthase (Clostridium acetobutylicum (strain ATCC 824 / DSM 792 / JCM 1419 / IAM 19013 / LMG 5710 / NBRC 13948 / NRRL B-527 / VKM B-1787 / 2291 / W)).